Reading from the N-terminus, the 1589-residue chain is Paternally-expressed gene 3 protein (1589 aa).

The 83-residue stretch at 46–128 (HQRFRNLIYV…TLLENYKEMY (83 aa)) folds into the SCAN box domain. Disordered regions lie at residues 128-230 (YQPE…ESYQ), 266-306 (DGHS…RRGI), and 319-349 (KFIK…MSDD). The segment covering 129–142 (QPEDDNNSDVTSDD) has biased composition (acidic residues). Basic and acidic residues-rich tracts occupy residues 143–152 (DMTRNRRESS), 161–182 (SGDR…DRWS), 206–225 (FEMD…RSQD), and 295–306 (PEAKKSTHRRGI). C2H2-type zinc fingers lie at residues 454–476 (YVCD…QIMH), 507–529 (FECK…RKIH), and 565–587 (YECR…QKIH). Residues 588 to 607 (FGDDKDNEREHERERERGET) show a composition bias toward basic and acidic residues. The tract at residues 588-610 (FGDDKDNEREHERERERGETFRP) is disordered. The segment at 627-649 (YECKVCGETFLHSSSLKEHQKIH) adopts a C2H2-type 4 zinc-finger fold. The interval 838-930 (LVASKPPRSH…EFSVPSSNVR (93 aa)) is disordered. A compositionally biased stretch (basic and acidic residues) spans 868 to 881 (LNDKRQKIPARENP). The C2H2-type 5 zinc finger occupies 969 to 991 (YECQECGECFAHSSDLTEHQKIH). The interval 1056-1104 (EKSHGEESQGENTDGEETHSEETHGQETIEDPVIQSSDMEDPQKDDPDD) is disordered. Residues 1071–1082 (EETHSEETHGQE) show a composition bias toward basic and acidic residues. 5 consecutive C2H2-type zinc fingers follow at residues 1107-1129 (YECE…QKVH), 1163-1185 (YECP…QRIH), 1225-1247 (IRCL…MRLH), 1282-1304 (FECA…VTVH), and 1332-1354 (YECK…KELH). The span at 1396-1416 (AEPEVEAAEPEVEAAEPEVEA) shows a compositional bias: acidic residues. Residues 1396–1496 (AEPEVEAAEP…GIEDPEEGED (101 aa)) form a disordered region. A run of 7 repeats spans residues 1398 to 1404 (PEVEAAE), 1405 to 1411 (PEVEAAE), 1412 to 1418 (PEVEAAE), 1419 to 1423 (PNGEA), 1426 to 1430 (PDGEA), 1433 to 1437 (PIGEA), and 1440 to 1444 (PNGEA). The interval 1398–1418 (PEVEAAEPEVEAAEPEVEAAE) is 3 X 7 AA repeat of P-E-V-E-A-A-E. Positions 1419 to 1444 (PNGEAEGPDGEAAEPIGEAGQPNGEA) are 4 X 5 AA repeat of P-X-G-E-A. 2 stretches are compositionally biased toward acidic residues: residues 1450-1467 (DADE…ERAE) and 1476-1496 (PEGD…EGED). 2 C2H2-type zinc fingers span residues 1506–1528 (YDCH…LKTH) and 1565–1587 (FKCD…QNTH).

Belongs to the krueppel C2H2-type zinc-finger protein family. Homodimer. Interacts with SIAH1A and SIAH2. Interacts with TRAF2.

It localises to the nucleus. The protein localises to the cytoplasm. Its function is as follows. Induces apoptosis in cooperation with SIAH1A. Acts as a mediator between p53/TP53 and BAX in a neuronal death pathway that is activated by DNA damage. Acts synergistically with TRAF2 and inhibits TNF induced apoptosis through activation of NF-kappa-B. The protein is Paternally-expressed gene 3 protein (PEG3) of Gorilla gorilla gorilla (Western lowland gorilla).